A 360-amino-acid polypeptide reads, in one-letter code: MAGHLASDFAFSPPPGGGGDGPGGPETGWVDPRTWLSFQGPPGGPGIGPGVGPGSEVWGIPPCPPPYEFCGGMAYCGPQVGVGLVPQGGLETSQPEGEAGAGVESNSDGASPEPCTVPTGAVKLEKEKLEQNPEESQDIKALQKELEQFAKLLKQKRITLGYTQADVGLTLGVLFGKVFSQTTICRFEALQLSFKNMCKLRPLLQKWVEEADNNENLQEICKAETLVQARKRKRTSIENRVRGSLENLFLQCPKPTLQQISHIAQQLGLEKDVVRVWFCNRRQKGKRSSSDYAQREDFEAAGSPFSGGPVSFPLAPGPHFGTPGYGSPHFTALYSSVPFPEGEAFPPVPVTTLGSPMHSN.

Disordered stretches follow at residues 1–53 (MAGH…GVGP) and 87–117 (QGGL…PCTV). Residues 4–12 (HLASDFAFS) carry the 9aaTAD motif. The segment covering 17-26 (GGGDGPGGPE) has biased composition (gly residues). Ser111 carries the post-translational modification Phosphoserine; by MAPK. Residue Lys123 forms a Glycyl lysine isopeptide (Lys-Gly) (interchain with G-Cter in SUMO) linkage. Residues 138–212 (DIKALQKELE…LLQKWVEEAD (75 aa)) form the POU-specific domain. Residues Arg157 and Gln164 each contribute to the DNA site. 2 DNA-binding regions span residues 180–186 (SQTTICR) and 193–196 (SFKN). Positions 230-289 (RKRKRTSIENRVRGSLENLFLQCPKPTLQQISHIAQQLGLEKDVVRVWFCNRRQKGKRSS) form a DNA-binding region, homeobox. Thr235 is subject to Phosphothreonine. Phosphoserine occurs at positions 236, 289, 290, and 355.

This sequence belongs to the POU transcription factor family. Class-5 subfamily. As to quaternary structure, interacts with PKM. Interacts with WWP2. Interacts with UBE2I and ZSCAN10. Interacts with PCGF1. Interacts with ESRRB; recruits ESRRB near the POU5F1-SOX2 element in the NANOG proximal promoter; the interaction is DNA independent. Interacts with ZNF322. Interacts with MAPK8 and MAPK9; the interaction allows MAPK8 and MAPK9 to phosphorylate POU5F1 on Ser-355. Interacts (when phosphorylated on Ser-355) with FBXW8. Interacts with FBXW4. Interacts with SOX2 and SOX15; binds synergistically with either SOX2 or SOX15 to DNA. Interacts with DDX56. In terms of processing, sumoylation enhances the protein stability, DNA binding and transactivation activity. Sumoylation is required for enhanced YES1 expression. Post-translationally, ubiquitinated; undergoes 'Lys-63'-linked polyubiquitination by WWP2 leading to proteasomal degradation. ERK1/2-mediated phosphorylation at Ser-111 promotes nuclear exclusion and proteasomal degradation. Phosphorylation at Thr-235 and Ser-236 decrease DNA-binding and alters ability to activate transcription.

It is found in the cytoplasm. It localises to the nucleus. In terms of biological role, transcription factor that binds to the octamer motif (5'-ATTTGCAT-3'). Forms a trimeric complex with SOX2 or SOX15 on DNA and controls the expression of a number of genes involved in embryonic development such as YES1, FGF4, UTF1 and ZFP206. Critical for early embryogenesis and for embryonic stem cell pluripotency. The sequence is that of POU domain, class 5, transcription factor 1 (POU5F1) from Macaca mulatta (Rhesus macaque).